The chain runs to 105 residues: TMEM14 protein homolog YJR085C (105 aa).

A run of 3 helical transmembrane segments spans residues 26 to 46 (IPSLVSGLVFGSVYGIAGYLL), 53 to 73 (GLEMALGASTLLLGAGVIRGM), and 77 to 97 (FTKPVPVVLTALGGLGSYYYY).

It belongs to the TMEM14 family.

It localises to the mitochondrion. Its subcellular location is the membrane. This Saccharomyces cerevisiae (strain ATCC 204508 / S288c) (Baker's yeast) protein is TMEM14 protein homolog YJR085C.